A 258-amino-acid chain; its full sequence is Spindlin-2 (258 aa).

A disordered region spans residues 1 to 47; it reads MKTPHKKATARQQTREIVDDHTLSASMRKKKISQKKQRGRPSSQTRR. A compositionally biased stretch (basic and acidic residues) spans 13–22; the sequence is QTREIVDDHT. A compositionally biased stretch (basic residues) spans 27–39; sequence MRKKKISQKKQRG. Tudor-like domain stretches follow at residues 50–99, 129–178, and 210–255; these read VGCR…LELH, IGKA…YQLL, and IGKH…YDLV. Histone H3K4me3 and H3R8me2a binding stretches follow at residues glutamate 138 and 246-248; that span reads DFH.

It belongs to the SPIN/STSY family. As to quaternary structure, interacts with C11orf84/SPINDOC.

It localises to the nucleus. Functionally, may be involved in the regulation of cell cycle progression. Exhibits H3K4me3-binding activity. This Bos taurus (Bovine) protein is Spindlin-2 (SPIN2).